The following is a 40-amino-acid chain: Large ribosomal subunit protein bL36A (40 aa).

The protein belongs to the bacterial ribosomal protein bL36 family.

This chain is Large ribosomal subunit protein bL36A, found in Kineococcus radiotolerans (strain ATCC BAA-149 / DSM 14245 / SRS30216).